Here is an 83-residue protein sequence, read N- to C-terminus: Putative membrane protein insertion efficiency factor (83 aa).

The protein belongs to the UPF0161 family.

The protein resides in the cell inner membrane. Could be involved in insertion of integral membrane proteins into the membrane. This chain is Putative membrane protein insertion efficiency factor, found in Pelagibacter ubique (strain HTCC1062).